Reading from the N-terminus, the 802-residue chain is MGKSQKKTAKGRLDKWYKLAKEQGYRSRAAFKLVQLNQKYSFLEKAKVIIDLCAAPGGWLQVASKTCKPGSLIVGVDLAPIKPIPNCHTFVEDITSDKCRSQLRGYLKTWKADVVLHDGAPNVGSAWLQDAYGQAQLVLMSMKLACEFLVAGGTFVTKVFRSRDYNNLLWVFKQLFNKVEATKPPSSRNVSAEIFVVCRGYKAPKKLDPRFTDPRTVFEEVQEPVTNVDAKVFHPEKRKRSREGYADDDYTLHKTVLASEFVTANDPIQILGTSAEIVFPKDDEECQRLYNLDVTTEEILLCCSDLQVLGKKEFRDILRWRLKIRDEMGIGKKVEDEQKTVVEEIPEMDEEERLDQELQDLSEAERVKLKRERRKANQRKQREIVRMQMGMLAPMDIGLEHEAMGEDSLFGLATAEKHGLKELENGTLPVTESVDEEVSTDNEVEYDSDDERDRLEADLDSMYSDYTKRKAESDVKYRVKKARGDLDDEEWNGIDNGTESDDSQIAETNFATPDKDRLTTSLLDKGSTKDGLSRKARMFFDQDIFDGIEDADADVEIMSMNRAAIKKREAELASQNNDDGSKGDQSEDSNDHIEVVPVASAHDEDDDWNSDSDNDENNVEIVTAEAMTLAQDIASRRKSKADLIDEGYNRWSFQSKEGLPDWFLDEETTVNKPNKPITKEAVLALREKMKALNARPIKKVLEAQGRKKMRTIKRLQRVAKKAEGISESGDMTESEKAKEISRLVSRATKSKPKAKPTLVVAKGPNKGLKSRPKGVKGKYKMVDSRMKKDLRAQKRLAKKGRR.

S-adenosyl-L-methionine is bound by residues Gly-57, Trp-59, Asp-77, Asp-93, and Asp-118. Lys-158 (proton acceptor) is an active-site residue. Residues 347–389 adopt a coiled-coil conformation; sequence EMDEEERLDQELQDLSEAERVKLKRERRKANQRKQREIVRMQM. Residue Ser-362 is modified to Phosphoserine. 4 disordered regions span residues 423 to 451, 487 to 513, 569 to 591, and 718 to 802; these read LENGTLPVTESVDEEVSTDNEVEYDSDDE, DDEEWNGIDNGTESDDSQIAETNFATP, EAELASQNNDDGSKGDQSEDSND, and VAKK…KGRR. 2 stretches are compositionally biased toward acidic residues: residues 433-450 and 487-504; these read SVDEEVSTDNEVEYDSDD and DDEEWNGIDNGTESDDSQ. Residues 579-591 are compositionally biased toward basic and acidic residues; the sequence is DGSKGDQSEDSND. A compositionally biased stretch (basic residues) spans 768–779; that stretch reads LKSRPKGVKGKY. Over residues 780 to 792 the composition is skewed to basic and acidic residues; that stretch reads KMVDSRMKKDLRA. Residues 793-802 are compositionally biased toward basic residues; it reads QKRLAKKGRR.

It belongs to the class I-like SAM-binding methyltransferase superfamily. RNA methyltransferase RlmE family. SPB1 subfamily. In terms of assembly, component of the nucleolar and nucleoplasmic pre-60S ribosomal particle.

It localises to the nucleus. The protein resides in the nucleolus. It carries out the reaction a ribonucleotide in rRNA + S-adenosyl-L-methionine = a 2'-O-methylribonucleotide in rRNA + S-adenosyl-L-homocysteine + H(+). Its function is as follows. Required for proper assembly of pre-ribosomal particles during the biogenesis of the 60S ribosomal subunit. The sequence is that of AdoMet-dependent rRNA methyltransferase spb1 (spb1) from Schizosaccharomyces pombe (strain 972 / ATCC 24843) (Fission yeast).